Here is a 365-residue protein sequence, read N- to C-terminus: Adenosine deaminase (365 aa).

Zn(2+)-binding residues include histidine 19 and histidine 21. Positions 21, 23, and 181 each coordinate substrate. Residue histidine 208 coordinates Zn(2+). Glutamate 211 serves as the catalytic Proton donor. Aspartate 300 contacts Zn(2+).

It belongs to the metallo-dependent hydrolases superfamily. Adenosine and AMP deaminases family. Adenosine deaminase subfamily. Zn(2+) serves as cofactor.

The enzyme catalyses adenosine + H2O + H(+) = inosine + NH4(+). It catalyses the reaction 2'-deoxyadenosine + H2O + H(+) = 2'-deoxyinosine + NH4(+). In terms of biological role, catalyzes the hydrolytic deamination of adenosine and 2-deoxyadenosine. This is Adenosine deaminase from Mycobacterium tuberculosis (strain ATCC 25177 / H37Ra).